A 915-amino-acid polypeptide reads, in one-letter code: Probable dipeptidyl-aminopeptidase B (915 aa).

Disordered regions lie at residues 1–20 (MAGEKGGSRDEEREPLTRGS) and 52–74 (QDSRLGEKDQRDDDHDQYRNEEE). At 1–95 (MAGEKGGSRD…GGKTVQKTTK (95 aa)) the chain is on the cytoplasmic side. The span at 55–72 (RLGEKDQRDDDHDQYRNE) shows a compositional bias: basic and acidic residues. The helical; Signal-anchor for type II membrane protein transmembrane segment at 96 to 116 (IVLWALLFLCVGGWSLAFVIF) threads the bilayer. Residues 117–915 (LFRGHDTPQT…RAETWGGLPV (799 aa)) lie on the Vacuolar side of the membrane. N-linked (GlcNAc...) asparagine glycosylation is found at Asn-133, Asn-179, Asn-349, and Asn-572. The active-site Charge relay system is Ser-754. Residue Asn-813 is glycosylated (N-linked (GlcNAc...) asparagine). Active-site charge relay system residues include Asp-831 and His-864. N-linked (GlcNAc...) asparagine glycosylation occurs at Asn-900.

Belongs to the peptidase S9B family.

The protein localises to the vacuole membrane. The enzyme catalyses Release of an N-terminal dipeptide, Xaa-Yaa-|-Zaa-, from a polypeptide, preferentially when Yaa is Pro, provided Zaa is neither Pro nor hydroxyproline.. Type IV dipeptidyl-peptidase which removes N-terminal dipeptides sequentially from polypeptides having unsubstituted N-termini provided that the penultimate residue is proline. The polypeptide is Probable dipeptidyl-aminopeptidase B (DAPB) (Blastomyces gilchristii (strain SLH14081) (Blastomyces dermatitidis)).